The chain runs to 189 residues: Elongation factor P (189 aa).

N6-(3,6-diaminohexanoyl)-5-hydroxylysine is present on K34.

Belongs to the elongation factor P family. Post-translationally, may be beta-lysylated on the epsilon-amino group of Lys-34 by the combined action of EpmA and EpmB, and then hydroxylated on the C5 position of the same residue by EpmC (if this protein is present). Lysylation is critical for the stimulatory effect of EF-P on peptide-bond formation. The lysylation moiety may extend toward the peptidyltransferase center and stabilize the terminal 3-CCA end of the tRNA. Hydroxylation of the C5 position on Lys-34 may allow additional potential stabilizing hydrogen-bond interactions with the P-tRNA.

It is found in the cytoplasm. The protein operates within protein biosynthesis; polypeptide chain elongation. Its function is as follows. Involved in peptide bond synthesis. Alleviates ribosome stalling that occurs when 3 or more consecutive Pro residues or the sequence PPG is present in a protein, possibly by augmenting the peptidyl transferase activity of the ribosome. Modification of Lys-34 is required for alleviation. The chain is Elongation factor P from Legionella pneumophila (strain Paris).